Here is a 362-residue protein sequence, read N- to C-terminus: Endolytic peptidoglycan transglycosylase RlpA (362 aa).

The N-terminal stretch at 1-17 is a signal peptide; sequence MRKQWLGICIAAGMLAA. Cys-18 carries N-palmitoyl cysteine lipidation. Cys-18 is lipidated: S-diacylglycerol cysteine. Residues 198 to 276 form a disordered region; the sequence is PDLSGGAGTS…PSTTPATSPA (79 aa). The span at 262-276 shows a compositional bias: low complexity; the sequence is PVVTAPSTTPATSPA. The region spanning 285-361 is the SPOR domain; that stretch reads QSASGNFMVQ…AQLQSFITTA (77 aa).

The protein belongs to the RlpA family.

It is found in the cell membrane. In terms of biological role, lytic transglycosylase with a strong preference for naked glycan strands that lack stem peptides. The sequence is that of Endolytic peptidoglycan transglycosylase RlpA from Escherichia coli (strain K12).